Consider the following 188-residue polypeptide: Ribosome maturation factor RimM (188 aa).

Residues 93–166 (EDEYYDHQLI…RAVIDPPPGL (74 aa)) form the PRC barrel domain.

Belongs to the RimM family. As to quaternary structure, binds ribosomal protein uS19.

The protein resides in the cytoplasm. In terms of biological role, an accessory protein needed during the final step in the assembly of 30S ribosomal subunit, possibly for assembly of the head region. Essential for efficient processing of 16S rRNA. May be needed both before and after RbfA during the maturation of 16S rRNA. It has affinity for free ribosomal 30S subunits but not for 70S ribosomes. This chain is Ribosome maturation factor RimM, found in Streptomyces coelicolor (strain ATCC BAA-471 / A3(2) / M145).